The chain runs to 341 residues: Phenylalanine--tRNA ligase alpha subunit (341 aa).

Residue E253 participates in Mg(2+) binding.

It belongs to the class-II aminoacyl-tRNA synthetase family. Phe-tRNA synthetase alpha subunit type 1 subfamily. In terms of assembly, tetramer of two alpha and two beta subunits. It depends on Mg(2+) as a cofactor.

It is found in the cytoplasm. It carries out the reaction tRNA(Phe) + L-phenylalanine + ATP = L-phenylalanyl-tRNA(Phe) + AMP + diphosphate + H(+). The polypeptide is Phenylalanine--tRNA ligase alpha subunit (Methylococcus capsulatus (strain ATCC 33009 / NCIMB 11132 / Bath)).